Consider the following 210-residue polypeptide: Putative 3-methyladenine DNA glycosylase (210 aa).

Positions 180 to 210 (SRPPPGAAAARAARAPAAPAPRPRRPRGSGP) are disordered. The segment covering 186–196 (AAAARAARAPA) has biased composition (low complexity). Positions 201 to 210 (RPRRPRGSGP) are enriched in basic residues.

It belongs to the DNA glycosylase MPG family.

In Anaeromyxobacter dehalogenans (strain 2CP-1 / ATCC BAA-258), this protein is Putative 3-methyladenine DNA glycosylase.